A 330-amino-acid polypeptide reads, in one-letter code: MESGSGSGAALNSTPFPTYSTPNFTDDYDWNSSDWYGLTNQCQAVSFSKLIVVPCLVILLVFCLIGNLWLLFKLLEKTVKKVSTFILILMCLNSFWGCLCMIFSIVENFAEFSTSVCKLRMVVFWVYVFFDMFLICWLCFDTWCAVWFSVRRTEANQKCWVFCTVALIILAFILSMQKALHVEAIKEYGQVRSSCQFHKETHSTLKVFNVAVSVNVLGFLLPLLFLCIFYGMCLWKLYKAVFKTKTKVIKTMLLFVFMFLLTWGPYYILSFIDGLLSAGYISESCSLKKTLGLMLPLLGLWGMAHGGLQVFIYILCNSHFNKSLFSCFKK.

7 helical membrane passes run 50 to 70 (LIVV…NLWL), 85 to 105 (FILI…IFSI), 121 to 141 (MVVF…LCFD), 160 to 180 (WVFC…QKAL), 210 to 230 (VAVS…CIFY), 252 to 272 (MLLF…LSFI), and 295 to 315 (LPLL…IYIL). Cys-117 and Cys-195 are joined by a disulfide.

Belongs to the G-protein coupled receptor 1 family.

The protein resides in the host membrane. This is G-protein coupled receptor 74 (74) from Equus caballus (Horse).